Here is a 219-residue protein sequence, read N- to C-terminus: Transmembrane protein 125 (219 aa).

The next 4 helical transmembrane spans lie at 36–56 (LCFV…VALL), 68–88 (LATG…QLMS), 114–134 (ALVV…LAGL), and 147–167 (MLSV…GLLL).

The protein resides in the membrane. The polypeptide is Transmembrane protein 125 (TMEM125) (Homo sapiens (Human)).